The primary structure comprises 923 residues: DNA mismatch repair protein MutS (923 aa).

Residue 671–678 (GPNMAGKS) participates in ATP binding.

Belongs to the DNA mismatch repair MutS family.

This protein is involved in the repair of mismatches in DNA. It is possible that it carries out the mismatch recognition step. This protein has a weak ATPase activity. This chain is DNA mismatch repair protein MutS, found in Rhodopseudomonas palustris (strain BisB5).